The following is a 155-amino-acid chain: Interleukin-2 (155 aa).

The signal sequence occupies residues 1 to 20 (MYKMQLLSCIALTLVLVANS). Threonine 24 carries an O-linked (GalNAc...) threonine glycan. A disulfide bond links cysteine 79 and cysteine 127. N-linked (GlcNAc...) asparagine glycosylation occurs at asparagine 112.

Belongs to the IL-2 family.

It is found in the secreted. Functionally, cytokine produced by activated CD4-positive helper T-cells and to a lesser extend activated CD8-positive T-cells and natural killer (NK) cells that plays pivotal roles in the immune response and tolerance. Binds to a receptor complex composed of either the high-affinity trimeric IL-2R (IL2RA/CD25, IL2RB/CD122 and IL2RG/CD132) or the low-affinity dimeric IL-2R (IL2RB and IL2RG). Interaction with the receptor leads to oligomerization and conformation changes in the IL-2R subunits resulting in downstream signaling starting with phosphorylation of JAK1 and JAK3. In turn, JAK1 and JAK3 phosphorylate the receptor to form a docking site leading to the phosphorylation of several substrates including STAT5. This process leads to activation of several pathways including STAT, phosphoinositide-3-kinase/PI3K and mitogen-activated protein kinase/MAPK pathways. Functions as a T-cell growth factor and can increase NK-cell cytolytic activity as well. Promotes strong proliferation of activated B-cells and subsequently immunoglobulin production. Plays a pivotal role in regulating the adaptive immune system by controlling the survival and proliferation of regulatory T-cells, which are required for the maintenance of immune tolerance. Moreover, participates in the differentiation and homeostasis of effector T-cell subsets, including Th1, Th2, Th17 as well as memory CD8-positive T-cells. The chain is Interleukin-2 (IL2) from Canis lupus familiaris (Dog).